The sequence spans 134 residues: Biopolymer transport protein exbD2 (134 aa).

Over 1 to 17 (MRLGRRTSKQEEAQIDL) the chain is Cytoplasmic. Residues 18–38 (TSMLDIVFIMLIFFIVTSSFV) form a helical membrane-spanning segment. Residues 39 to 134 (RESGVEVNRP…KSIALAAEKP (96 aa)) are Periplasmic-facing.

Belongs to the ExbD/TolR family. As to quaternary structure, the accessory proteins ExbB and ExbD seem to form a complex with TonB.

The protein resides in the cell inner membrane. Involved in the TonB-dependent energy-dependent transport of various receptor-bound substrates. This chain is Biopolymer transport protein exbD2 (exbD2), found in Vibrio cholerae serotype O1 (strain ATCC 39315 / El Tor Inaba N16961).